We begin with the raw amino-acid sequence, 59 residues long: U17-myrmicitoxin-Tb1f (59 aa).

A signal peptide spans 1–27; it reads MEKNRTTTFSVYLTIILFLISTFITMV. The propeptide occupies 28–31; the sequence is ITES. The residue at position 58 (His-58) is a Histidine amide.

As to expression, expressed by the venom gland.

The protein localises to the secreted. This is U17-myrmicitoxin-Tb1f from Tetramorium bicarinatum (Tramp ant).